The primary structure comprises 610 residues: Elongation factor 4 (610 aa).

The tr-type G domain maps to 11–193; it reads EKIRNFSIIA…QIVEKVPAPT (183 aa). GTP contacts are provided by residues 23–28 and 140–143; these read DHGKST and NKID.

The protein belongs to the TRAFAC class translation factor GTPase superfamily. Classic translation factor GTPase family. LepA subfamily.

Its subcellular location is the cell membrane. It carries out the reaction GTP + H2O = GDP + phosphate + H(+). Required for accurate and efficient protein synthesis under certain stress conditions. May act as a fidelity factor of the translation reaction, by catalyzing a one-codon backward translocation of tRNAs on improperly translocated ribosomes. Back-translocation proceeds from a post-translocation (POST) complex to a pre-translocation (PRE) complex, thus giving elongation factor G a second chance to translocate the tRNAs correctly. Binds to ribosomes in a GTP-dependent manner. This is Elongation factor 4 from Streptococcus pyogenes serotype M2 (strain MGAS10270).